The chain runs to 336 residues: Aspartate--ammonia ligase (336 aa).

This sequence belongs to the class-II aminoacyl-tRNA synthetase family. AsnA subfamily.

It is found in the cytoplasm. It carries out the reaction L-aspartate + NH4(+) + ATP = L-asparagine + AMP + diphosphate + H(+). The protein operates within amino-acid biosynthesis; L-asparagine biosynthesis; L-asparagine from L-aspartate (ammonia route): step 1/1. In Clostridium perfringens (strain ATCC 13124 / DSM 756 / JCM 1290 / NCIMB 6125 / NCTC 8237 / Type A), this protein is Aspartate--ammonia ligase.